Reading from the N-terminus, the 65-residue chain is Metallothionein-B (65 aa).

This sequence belongs to the metallothionein superfamily. Type 4 family.

Functionally, metallothioneins have a high content of cysteine residues that bind various heavy metals. The protein is Metallothionein-B (MTB1) of Strongylocentrotus purpuratus (Purple sea urchin).